The chain runs to 115 residues: uncharacterized protein (115 aa).

This is an uncharacterized protein from Gallus gallus (Chicken).